Here is a 214-residue protein sequence, read N- to C-terminus: Phosphatidylserine decarboxylase proenzyme (214 aa).

Ser-182 serves as the catalytic Schiff-base intermediate with substrate; via pyruvic acid. Ser-182 carries the post-translational modification Pyruvic acid (Ser); by autocatalysis.

Belongs to the phosphatidylserine decarboxylase family. PSD-A subfamily. As to quaternary structure, heterodimer of a large membrane-associated beta subunit and a small pyruvoyl-containing alpha subunit. Pyruvate serves as cofactor. Post-translationally, is synthesized initially as an inactive proenzyme. Formation of the active enzyme involves a self-maturation process in which the active site pyruvoyl group is generated from an internal serine residue via an autocatalytic post-translational modification. Two non-identical subunits are generated from the proenzyme in this reaction, and the pyruvate is formed at the N-terminus of the alpha chain, which is derived from the carboxyl end of the proenzyme. The post-translation cleavage follows an unusual pathway, termed non-hydrolytic serinolysis, in which the side chain hydroxyl group of the serine supplies its oxygen atom to form the C-terminus of the beta chain, while the remainder of the serine residue undergoes an oxidative deamination to produce ammonia and the pyruvoyl prosthetic group on the alpha chain.

The protein resides in the cell membrane. The catalysed reaction is a 1,2-diacyl-sn-glycero-3-phospho-L-serine + H(+) = a 1,2-diacyl-sn-glycero-3-phosphoethanolamine + CO2. Its pathway is phospholipid metabolism; phosphatidylethanolamine biosynthesis; phosphatidylethanolamine from CDP-diacylglycerol: step 2/2. In terms of biological role, catalyzes the formation of phosphatidylethanolamine (PtdEtn) from phosphatidylserine (PtdSer). This Solidesulfovibrio magneticus (strain ATCC 700980 / DSM 13731 / RS-1) (Desulfovibrio magneticus) protein is Phosphatidylserine decarboxylase proenzyme.